The chain runs to 83 residues: Putative defensin-like protein 150 (83 aa).

The first 25 residues, 1–25, serve as a signal peptide directing secretion; that stretch reads MMGKHIQLSFAILIMFTIFVLGAVG. Disulfide bonds link C35-C83, C44-C64, C49-C77, and C53-C79.

This sequence belongs to the DEFL family.

The protein localises to the secreted. The sequence is that of Putative defensin-like protein 150 (LCR32) from Arabidopsis thaliana (Mouse-ear cress).